Reading from the N-terminus, the 358-residue chain is D-alanine--D-alanine ligase (358 aa).

One can recognise an ATP-grasp domain in the interval 136–341 (KYILQAAGVP…YGDLIEELIQ (206 aa)). 169–224 (EGSLLYPMFVKPANMGSSVGISKAENREELQNALALAYQYDSRAIVEQGIEAREIE) lines the ATP pocket. 3 residues coordinate Mg(2+): Asp-295, Glu-308, and Asn-310.

It belongs to the D-alanine--D-alanine ligase family. Mg(2+) is required as a cofactor. Mn(2+) serves as cofactor.

The protein localises to the cytoplasm. It carries out the reaction 2 D-alanine + ATP = D-alanyl-D-alanine + ADP + phosphate + H(+). It functions in the pathway cell wall biogenesis; peptidoglycan biosynthesis. Its function is as follows. Cell wall formation. In Enterococcus hirae (strain ATCC 9790 / DSM 20160 / JCM 8729 / LMG 6399 / NBRC 3181 / NCIMB 6459 / NCDO 1258 / NCTC 12367 / WDCM 00089 / R), this protein is D-alanine--D-alanine ligase.